Reading from the N-terminus, the 532-residue chain is O-phosphoserine--tRNA(Cys) ligase (532 aa).

Residues 186 to 188 (HMT), 231 to 233 (SAS), 273 to 274 (YY), and N317 contribute to the substrate site.

Belongs to the class-II aminoacyl-tRNA synthetase family. O-phosphoseryl-tRNA(Cys) synthetase subfamily. As to quaternary structure, homotetramer. Interacts with SepCysS.

It carries out the reaction tRNA(Cys) + O-phospho-L-serine + ATP = O-phospho-L-seryl-tRNA(Cys) + AMP + diphosphate. Catalyzes the attachment of O-phosphoserine (Sep) to tRNA(Cys). This Methanothermobacter thermautotrophicus (strain ATCC 29096 / DSM 1053 / JCM 10044 / NBRC 100330 / Delta H) (Methanobacterium thermoautotrophicum) protein is O-phosphoserine--tRNA(Cys) ligase.